Reading from the N-terminus, the 391-residue chain is Multidrug resistance protein MdtL (391 aa).

12 helical membrane-spanning segments follow: residues 4 to 24 (FLIC…MYLV), 42 to 62 (IAFS…GKVA), 69 to 89 (PVAI…SLAE), 93 to 113 (LFLA…VVAF), 131 to 151 (LLNG…HLIM), 158 to 178 (SLFW…LFIL), 203 to 222 (FFLS…LTFV), 245 to 265 (ALTA…LGIF), 269 to 289 (TLMI…AVSP), 293 to 313 (VSLF…GVAM), 331 to 351 (LGIA…VVGI), and 356 to 376 (MLIG…MFVA).

This sequence belongs to the major facilitator superfamily. DHA1 family. MdtL (TC 2.A.1.2.22) subfamily.

The protein resides in the cell inner membrane. Functionally, confers resistance to chloramphenicol. This chain is Multidrug resistance protein MdtL, found in Escherichia coli O9:H4 (strain HS).